The chain runs to 370 residues: Protein DUF642 L-GALACTONO-1,4-LACTONE-RESPONSIVE GENE 1 (370 aa).

Positions 1 to 22 (MMYQEAALLLALLFISSNVVLS) are cleaved as a signal peptide. A glycan (N-linked (GlcNAc...) asparagine) is linked at N124.

Expressed at low levels in roots, seedlings and leaves.

The protein resides in the secreted. Its subcellular location is the cell wall. In Arabidopsis thaliana (Mouse-ear cress), this protein is Protein DUF642 L-GALACTONO-1,4-LACTONE-RESPONSIVE GENE 1.